The sequence spans 57 residues: High light-inducible protein HliD (57 aa).

The Chlorophyll-binding motif motif lies at 25-30; sequence EKLNGR. A helical transmembrane segment spans residues 25–46; the sequence is EKLNGRAAMVGFLLILVIEYFT.

This sequence belongs to the Hlip family. In terms of assembly, probably forms dimers which bind 6 chlorophyll a and 2 beta-carotenoid molecules. Cofractionates in an approximately 50 kDa fraction of the thylakoid membrane with HliC. Does not associate with mature PSII. Purified in several chlorophyll- and carotenoid-containing complexes, including photosystem II (PSII) assembly intermediate complex RCII* (iD1, D1, D2, PsbE, PsbF, PsbI, Ycf39, Ycf48, HliC and HliD) and the Ycf39-Hlip complex (Ycf39, HliC, HliD and pigments).

Its subcellular location is the cellular thylakoid membrane. Involved in photosystem II (PSII) assembly and/or repair under high light stress. Required for binding of chlorophyll and carotenoids by the Ycf39-Hlip complex. The Ycf39-Hlip complex binds D1 at an early stage of PSII assembly along with Ycf48, ribosomes and ChlG, the last enzyme in chlorophyll biosynthesis; it may be involved in chlorophyll reuse and delivery to D1 in the initial stages of PSII assembly. Binds chlorophyll a and beta-carotenoid in a 3:1 stoichiometry in the presence and absence of Yfc39; in the Ycf39-HliC-HliD complex, HliD binds all the pigment. The Ycf39-Hlip complex efficiently quenches chlorophyll fluorescence, contributing to photoprotection. Deletion of 4 to 5 members of the Hlip family suggests the proteins are involved in regulation of chlorophyll biosynthesis, in stabilization of chlorophyll-binding proteins and/or in reuse of chlorophylls, and may regulate tetrapyrrole biosynthesis. Might bind chlorophyll and/or carotenoids in association with HliC (called the ScpBE pair). Its function is as follows. The Hlips might regulate tetrapyrrole biosynthesis, maybe at the level of aminolevulinic acid synthesis and probably stabilize PSII assembly intermediates. This Synechocystis sp. (strain ATCC 27184 / PCC 6803 / Kazusa) protein is High light-inducible protein HliD (hliD).